Reading from the N-terminus, the 588-residue chain is Oxidoreductase NdmD (588 aa).

Positions 9–114 (WFPIATTEDL…VREKHGFIWT (106 aa)) constitute a Rieske domain. Residues Cys50, His52, Cys69, and His72 each coordinate [2Fe-2S] cluster. An FAD-binding FR-type domain is found at 272–373 (PTHYICEVVT…TLPRNGFPLV (102 aa)). The 2Fe-2S ferredoxin-type domain occupies 503–588 (YEVELKKTGQ…CKSKKIVLDL (86 aa)). [2Fe-2S] cluster-binding residues include Cys537, Cys542, Cys545, and Cys575.

[2Fe-2S] cluster serves as cofactor.

Functionally, involved in the caffeine degradation, which is the essential first step for assimilating the carbon and nitrogen in caffeine. Catalyzes the oxidation of NADH and transfers electrons to NdmA and NdmB, which catalyze the N-demethylation reactions. In Pseudomonas putida (Arthrobacter siderocapsulatus), this protein is Oxidoreductase NdmD (ndmD).